The chain runs to 281 residues: Large ribosomal subunit protein uL2 (281 aa).

The segment covering 27–38 has biased composition (basic and acidic residues); that stretch reads DSPEKSLTEPLK. Disordered stretches follow at residues 27-59 and 225-281; these read DSPE…GGHK and AMNP…ARSQ. A compositionally biased stretch (basic residues) spans 45-59; the sequence is VHGHITRRHQGGGHK.

Belongs to the universal ribosomal protein uL2 family. In terms of assembly, part of the 50S ribosomal subunit. Forms a bridge to the 30S subunit in the 70S ribosome.

In terms of biological role, one of the primary rRNA binding proteins. Required for association of the 30S and 50S subunits to form the 70S ribosome, for tRNA binding and peptide bond formation. It has been suggested to have peptidyltransferase activity; this is somewhat controversial. Makes several contacts with the 16S rRNA in the 70S ribosome. In Myxococcus xanthus (strain DK1622), this protein is Large ribosomal subunit protein uL2.